The primary structure comprises 311 residues: MSTFSLKIIRVGITVLVVVLAVIAIFNVWAFYTESPWTRDAKFTADVVAIAPDVSGLLTEVPVKDNQLVQKGQILFVIDQPRYQQALAEAEADVAYYQTLAAEKQRESSRRHRLGIQALSQEEIDQASNVLQTVQHQLAKAIAVRDLARLDLERTTVRAPAEGWVTNLNVHAGEFINRGATAVALVKKDTFYILAYLEETKLEGVKPGYRAEITPLGSNRILHGTVDSISAGVTNSSSSADSKGLATIDNNLEWVRLAQRVPVKIHLDSEDQQYLYPAGTTATVVITGPNDRDPHQVSPMTKLMHRLREFG.

A helical membrane pass occupies residues 11–31 (VGITVLVVVLAVIAIFNVWAF).

The protein belongs to the membrane fusion protein (MFP) (TC 8.A.1) family.

Its subcellular location is the cell inner membrane. Functionally, forms an efflux pump with AaeB. The sequence is that of p-hydroxybenzoic acid efflux pump subunit AaeA from Yersinia pseudotuberculosis serotype O:3 (strain YPIII).